The following is a 3332-amino-acid chain: Nonribosomal peptide synthetase imqB (3332 aa).

Residues 230-622 are adenylation 1; that stretch reads FSEQVKAHPG…IGRKDTQVKV (393 aa). A Carrier 1 domain is found at 764–846; that stretch reads GRITPQEKLL…DMARCITRVD (83 aa). Ser-801 carries the post-translational modification O-(pantetheine 4'-phosphoryl)serine. The condensation 1 stretch occupies residues 886 to 1314; it reads DIYPCTPLQE…NCLTRKELHQ (429 aa). The segment at 1336–1740 is adenylation 2; the sequence is EVSNTRPTAP…GRKDRQLKVR (405 aa). One can recognise a Carrier 2 domain in the interval 1880-1954; that stretch reads AIATPKEEKL…EMAEKAAETG (75 aa). O-(pantetheine 4'-phosphoryl)serine is present on Ser-1915. Positions 1992 to 2402 are condensation 2; it reads EDIYPCTPLQ…CLSEIDTQQI (411 aa). Residues 2422-2819 are adenylation 3; that stretch reads AQQAREHPAT…GRKDTQVKIR (398 aa). The Carrier 3 domain occupies 2963 to 3039; that stretch reads EVATNDEAAV…DLASRIGRVE (77 aa). Ser-3000 carries the O-(pantetheine 4'-phosphoryl)serine modification. Residues 3058 to 3323 are thioesterase (TE) domain; it reads SSNPTLIQGQ…ETTRHIRDFC (266 aa).

Belongs to the NRP synthetase family.

Its pathway is secondary metabolite biosynthesis. Its function is as follows. Nonribosomal peptide synthetase; part of the gene cluster that mediates the biosynthesis of imizoquins A to D, tripeptide-derived alkaloids that serve a protective role against oxidative stress that are essential for normal germination. ImqB is a canonical three-module NRPS that assembles the tripeptide backbone of the imizoquins via condensation of Trp, Tyr, and Leu-derived precursors. N-methylation by imqF and phenol oxidation by imqC, followed by cyclization via the FAD-dependent oxidase imqH carry out the three-step transformation of L-tyrosine into tetrahydroisoquinoline. Importantly, this sequence requires the presence of a free amine in the tyrosine moiety, indicating that isoquinoline formation occurs prior to peptide bond formation. The imidazolidin-4-one ring of imizoquins could form following additional oxidation of the methyl-derived bridgehead carbon by imqH. Lastly, O-methylation by imqG and leucine hydroxylation by imqE complete biosynthesis of the imizoquins. The protein is Nonribosomal peptide synthetase imqB of Aspergillus flavus (strain ATCC 200026 / FGSC A1120 / IAM 13836 / NRRL 3357 / JCM 12722 / SRRC 167).